A 570-amino-acid chain; its full sequence is 5-aminolevulinate synthase, mitochondrial (570 aa).

Residues 1–53 constitute a mitochondrion transit peptide; it reads MESVIRSSAKICPFMHSATGSMQSVKALKNANLPAIAQQCPFMGKAMEQRRGY. Residues arginine 119, serine 232, and lysine 251 each contribute to the substrate site. 3 residues coordinate pyridoxal 5'-phosphate: serine 284, histidine 312, and threonine 356. Lysine 359 is an active-site residue. N6-(pyridoxal phosphate)lysine is present on lysine 359. Pyridoxal 5'-phosphate-binding residues include threonine 388 and threonine 389. Threonine 474 serves as a coordination point for substrate.

It belongs to the class-II pyridoxal-phosphate-dependent aminotransferase family. As to quaternary structure, homodimer. Pyridoxal 5'-phosphate is required as a cofactor.

It is found in the mitochondrion matrix. The enzyme catalyses succinyl-CoA + glycine + H(+) = 5-aminolevulinate + CO2 + CoA. The protein operates within porphyrin-containing compound metabolism; protoporphyrin-IX biosynthesis; 5-aminolevulinate from glycine: step 1/1. Functionally, catalyzes the synthesis of 5-aminolevulinate (ALA) from succinyl-CoA and glycine, the first and rate-limiting step in heme biosynthesis. This Kluyveromyces lactis (strain ATCC 8585 / CBS 2359 / DSM 70799 / NBRC 1267 / NRRL Y-1140 / WM37) (Yeast) protein is 5-aminolevulinate synthase, mitochondrial (HEM1).